The following is a 274-amino-acid chain: Ubiquinone biosynthesis protein COQ4 homolog, mitochondrial (274 aa).

Residues 1–20 (MLRQTAFRSMKLNRTPGRYF) constitute a mitochondrion transit peptide. Residues 13–40 (NRTPGRYFTTAENMDTGSSQSPPDTEQK) are disordered. Positions 22–36 (TAENMDTGSSQSPPD) are enriched in polar residues. Positions 177, 178, 181, and 193 each coordinate Zn(2+).

Belongs to the COQ4 family. In terms of assembly, component of a multi-subunit COQ enzyme complex. Zn(2+) serves as cofactor.

It is found in the mitochondrion inner membrane. The enzyme catalyses a 4-hydroxy-3-methoxy-5-(all-trans-polyprenyl)benzoate + H(+) = a 2-methoxy-6-(all-trans-polyprenyl)phenol + CO2. It participates in cofactor biosynthesis; ubiquinone biosynthesis. In terms of biological role, lyase that catalyzes the C1-decarboxylation of 4-hydroxy-3-methoxy-5-(all-trans-polyprenyl)benzoic acid into 2-methoxy-6-(all-trans-polyprenyl)phenol during ubiquinone biosynthesis. The chain is Ubiquinone biosynthesis protein COQ4 homolog, mitochondrial from Aedes aegypti (Yellowfever mosquito).